We begin with the raw amino-acid sequence, 497 residues long: Probable malate:quinone oxidoreductase (497 aa).

It belongs to the MQO family. FAD is required as a cofactor.

It catalyses the reaction (S)-malate + a quinone = a quinol + oxaloacetate. The protein operates within carbohydrate metabolism; tricarboxylic acid cycle; oxaloacetate from (S)-malate (quinone route): step 1/1. The chain is Probable malate:quinone oxidoreductase from Hahella chejuensis (strain KCTC 2396).